The following is a 517-amino-acid chain: Sphingolipid C9-methyltransferase A (517 aa).

2 consecutive transmembrane segments (helical) span residues 58 to 78 (LLIL…GGGL) and 80 to 100 (TTIF…WSIA). Residues 223 to 224 (YT), 286 to 291 (TLGRNQ), and 316 to 317 (YR) each bind S-adenosyl-L-methionine. A glycan (N-linked (GlcNAc...) asparagine) is linked at Asn290. Asn478 carries an N-linked (GlcNAc...) asparagine glycan.

This sequence belongs to the CFA/CMAS family.

The protein localises to the membrane. The catalysed reaction is a (4E,8E)-4-sphinga-4,8-dienine ceramide + S-adenosyl-L-methionine = a 9-methyl-(4E,8E)-sphinga-4,8-dienine ceramide + S-adenosyl-L-homocysteine + H(+). It participates in lipid metabolism; sphingolipid metabolism. In terms of biological role, catalyzes methylation of the sphingoid base component of glucosylceramides (GluCers) at the C9-position. Sphingolipid C9-methylation requires 4,8-desaturated ceramides as substrates. Glucosylceramides play important roles in growth, differentiation and pathogenicity. The methyl group at the C9-position distinguishes fungal glucosylceramides from those of plants and animals and may thus play a role in host-pathogen interactions enabling the host to recognize the fungal attack and initiate specific defense responses. This Emericella nidulans (strain FGSC A4 / ATCC 38163 / CBS 112.46 / NRRL 194 / M139) (Aspergillus nidulans) protein is Sphingolipid C9-methyltransferase A.